Here is a 312-residue protein sequence, read N- to C-terminus: Olfactory receptor 1500 (312 aa).

Residues 1 to 25 (MTGNNQTLILEFLLLGLPIPSEYHL) are Extracellular-facing. N5 carries an N-linked (GlcNAc...) asparagine glycan. The helical transmembrane segment at 26-49 (LFYALFLAMYLTIILGNLLIIVLV) threads the bilayer. Topologically, residues 50 to 57 (RLDSHLHM) are cytoplasmic. A helical membrane pass occupies residues 58–79 (PMYLFLSNLSFSDLCFSSVTMP). The Extracellular segment spans residues 80-100 (KLLQNMQSQVPSISYTGCLTQ). A disulfide bond links C97 and C189. A helical transmembrane segment spans residues 101–120 (LYFFMVFGDMESFLLVVMAY). Residues 121 to 139 (DRYVAICFPLRYTTIMSTK) lie on the Cytoplasmic side of the membrane. A helical transmembrane segment spans residues 140–158 (FCASLVLLLWMLTMTHALL). Topologically, residues 159 to 196 (HTLLIARLSFCEKNVILHFFCDISALLKLSCSDIYVNE) are extracellular. The chain crosses the membrane as a helical span at residues 197-219 (LMIYILGGLIIIIPFLLIVMSYV). Residues 220-236 (RIFFSILKFPSIQDIYK) lie on the Cytoplasmic side of the membrane. Residues 237 to 260 (VFSTCGSHLSVVTLFYGTIFGIYL) traverse the membrane as a helical segment. At 261 to 272 (CPSGNNSTVKEI) the chain is on the extracellular side. A helical transmembrane segment spans residues 273-292 (AMAMMYTVVTPMLNPFIYSL). Residues 293 to 312 (RNRDMKRALIRVICTKKISL) lie on the Cytoplasmic side of the membrane.

The protein belongs to the G-protein coupled receptor 1 family. In terms of tissue distribution, olfactory epithelium.

Its subcellular location is the cell membrane. Odorant receptor. The protein is Olfactory receptor 1500 (Olr1500) of Rattus norvegicus (Rat).